Here is a 158-residue protein sequence, read N- to C-terminus: Retinoic acid receptor beta (158 aa).

The segment covering 1–18 (RHSAQSIETQSTSSEELV) has biased composition (low complexity). A disordered region spans residues 1 to 24 (RHSAQSIETQSTSSEELVPSPPSP). Positions 31–106 (YKPCFVCQDK…VGMSKESVRN (76 aa)) form a DNA-binding region, nuclear receptor. NR C4-type zinc fingers lie at residues 34–54 (CFVC…CEGC) and 70–94 (CHRD…LQRC). One can recognise an NR LBD domain in the interval 129 to 158 (ELDDLTEKIRKAHQETFPSLCQLGKYTTNS).

Belongs to the nuclear hormone receptor family. NR1 subfamily. In terms of assembly, heterodimer; with a RXR molecule. Binds DNA preferentially as a RAR/RXR heterodimer.

The protein resides in the nucleus. In terms of biological role, receptor for retinoic acid. Retinoic acid receptors bind as heterodimers to their target response elements in response to their ligands, all-trans or 9-cis retinoic acid, and regulate gene expression in various biological processes. The RAR/RXR heterodimers bind to the retinoic acid response elements (RARE) composed of tandem 5'-AGGTCA-3' sites known as DR1-DR5. The polypeptide is Retinoic acid receptor beta (RARB) (Notophthalmus viridescens (Eastern newt)).